The chain runs to 453 residues: Trigger factor (453 aa).

The region spanning 171–256 is the PPIase FKBP-type domain; it reads GDRVTINFKG…ATSIEAPQDI (86 aa).

Belongs to the FKBP-type PPIase family. Tig subfamily.

Its subcellular location is the cytoplasm. The catalysed reaction is [protein]-peptidylproline (omega=180) = [protein]-peptidylproline (omega=0). Its function is as follows. Involved in protein export. Acts as a chaperone by maintaining the newly synthesized protein in an open conformation. Functions as a peptidyl-prolyl cis-trans isomerase. The protein is Trigger factor of Bradyrhizobium diazoefficiens (strain JCM 10833 / BCRC 13528 / IAM 13628 / NBRC 14792 / USDA 110).